We begin with the raw amino-acid sequence, 128 residues long: Small ribosomal subunit protein uS9 (128 aa).

The span at Arg97–Lys113 shows a compositional bias: basic and acidic residues. A disordered region spans residues Arg97–Arg128. Over residues Pro114–Arg128 the composition is skewed to basic residues.

The protein belongs to the universal ribosomal protein uS9 family.

The polypeptide is Small ribosomal subunit protein uS9 (Bacteroides fragilis (strain ATCC 25285 / DSM 2151 / CCUG 4856 / JCM 11019 / LMG 10263 / NCTC 9343 / Onslow / VPI 2553 / EN-2)).